A 267-amino-acid polypeptide reads, in one-letter code: 4-hydroxy-tetrahydrodipicolinate reductase (267 aa).

NAD(+) is bound by residues 12–17 (GPRGRM), 100–102 (GTT), and 126–129 (APNF). Residue His156 is the Proton donor/acceptor of the active site. His157 provides a ligand contact to (S)-2,3,4,5-tetrahydrodipicolinate. The active-site Proton donor is Lys160. 166-167 (GT) provides a ligand contact to (S)-2,3,4,5-tetrahydrodipicolinate.

This sequence belongs to the DapB family.

It is found in the cytoplasm. It catalyses the reaction (S)-2,3,4,5-tetrahydrodipicolinate + NAD(+) + H2O = (2S,4S)-4-hydroxy-2,3,4,5-tetrahydrodipicolinate + NADH + H(+). It carries out the reaction (S)-2,3,4,5-tetrahydrodipicolinate + NADP(+) + H2O = (2S,4S)-4-hydroxy-2,3,4,5-tetrahydrodipicolinate + NADPH + H(+). Its pathway is amino-acid biosynthesis; L-lysine biosynthesis via DAP pathway; (S)-tetrahydrodipicolinate from L-aspartate: step 4/4. Functionally, catalyzes the conversion of 4-hydroxy-tetrahydrodipicolinate (HTPA) to tetrahydrodipicolinate. This chain is 4-hydroxy-tetrahydrodipicolinate reductase, found in Bacillus velezensis (strain DSM 23117 / BGSC 10A6 / LMG 26770 / FZB42) (Bacillus amyloliquefaciens subsp. plantarum).